Consider the following 763-residue polypeptide: ATP-dependent RNA helicase glh-1 (763 aa).

The tract at residues 1-30 (MSDGWSDSESAAKAKTGFGSGGGFGGGNNG) is disordered. Residues 18–30 (FGSGGGFGGGNNG) are compositionally biased toward gly residues. Repeat copies occupy residues 24 to 33 (FGGGNNGGSG), 34 to 43 (FGGGKNGGTG), 44 to 53 (FGGGNTGGSG), 54 to 63 (FGGGNTGGSG), 64 to 73 (FGGGKTGGSG), 74 to 83 (FGGGNTCGSG), and 84 to 93 (FGGGSTGGSP). The 7 X 10 AA tandem repeats, Gly-rich stretch occupies residues 24–93 (FGGGNNGGSG…FGGGSTGGSP (70 aa)). 2 consecutive CCHC-type zinc fingers follow at residues 158-175 (NNCF…DCPE) and 183-200 (RVCY…ECTE). Residues 193–230 (HTSRECTEERKPREGRTGGFGGGAGFGNNGGNDGFGGD) form a disordered region. The segment covering 194–208 (TSRECTEERKPREGR) has biased composition (basic and acidic residues). Residues 209–230 (TGGFGGGAGFGNNGGNDGFGGD) are compositionally biased toward gly residues. CCHC-type zinc fingers lie at residues 242 to 259 (MKCF…ECPE) and 262 to 279 (RGCF…ECPN). The Q motif motif lies at 341–369 (KTFAEANLTETMQKNVAHAGYSKTTPIQQ). The region spanning 372–556 (LPLVHQGYDI…RAFLRENYVM (185 aa)) is the Helicase ATP-binding domain. 385 to 392 (AQTGSGKT) is a binding site for ATP. The Phosphodegron signature appears at 423-427 (ILTPT). The DEAD box motif lies at 499–502 (DEAD). Positions 592–739 (DIDSYTTEKS…IVPDWMQGAA (148 aa)) constitute a Helicase C-terminal domain.

Belongs to the DEAD box helicase family. DDX4/VASA subfamily. Interacts with csn-5; this may prevent glh-1 degradation induced by kgb-1. Interacts with zyx-1. Interacts (via the N-terminal region containing the four CCHC zinc fingers) with pan-1. Interacts with kgb-1; this may promote glh-1 degradation by the proteasome. Phosphorylated by kgb-1 (in vitro); this may be responsible for its degradation by the proteasome.

It localises to the cytoplasm. The protein resides in the cytoplasmic granule. The protein localises to the perinuclear region. It catalyses the reaction ATP + H2O = ADP + phosphate + H(+). In terms of biological role, probable ATP-binding RNA helicase. May act redundantly with the P-granule component glh-4 to regulate the formation of the granular structure of P-granules in embryos. Plays a role in positively regulating the localization of pgl-1 to P-granules. May play a role in transgenerational epigenetic inheritance. May protect somatic cells from excessive apoptosis during normal development. This chain is ATP-dependent RNA helicase glh-1, found in Caenorhabditis elegans.